Reading from the N-terminus, the 413-residue chain is Serine hydroxymethyltransferase (413 aa).

Residues L119 and 123–125 (GHL) each bind (6S)-5,6,7,8-tetrahydrofolate. An N6-(pyridoxal phosphate)lysine modification is found at K228.

This sequence belongs to the SHMT family. As to quaternary structure, homodimer. Requires pyridoxal 5'-phosphate as cofactor.

It localises to the cytoplasm. The enzyme catalyses (6R)-5,10-methylene-5,6,7,8-tetrahydrofolate + glycine + H2O = (6S)-5,6,7,8-tetrahydrofolate + L-serine. Its pathway is one-carbon metabolism; tetrahydrofolate interconversion. The protein operates within amino-acid biosynthesis; glycine biosynthesis; glycine from L-serine: step 1/1. Functionally, catalyzes the reversible interconversion of serine and glycine with tetrahydrofolate (THF) serving as the one-carbon carrier. This reaction serves as the major source of one-carbon groups required for the biosynthesis of purines, thymidylate, methionine, and other important biomolecules. Also exhibits THF-independent aldolase activity toward beta-hydroxyamino acids, producing glycine and aldehydes, via a retro-aldol mechanism. The sequence is that of Serine hydroxymethyltransferase from Desulfatibacillum aliphaticivorans.